Here is a 1492-residue protein sequence, read N- to C-terminus: Neogenin (1492 aa).

The first 36 residues, 1–36, serve as a signal peptide directing secretion; it reads MAAEREAGRLLCTSSSRRCCPPPPLLLLLPLLLLLG. The Extracellular segment spans residues 37-1136; the sequence is RPASGAAATK…PTSPLDSNML (1100 aa). Ig-like C2-type domains follow at residues 63–158, 163–249, 254–347, and 352–437; these read PFYF…AKLT, PRFT…AELK, PEEI…AELT, and PGFL…AQLI. A glycan (N-linked (GlcNAc...) asparagine) is linked at Asn84. 3 cysteine pairs are disulfide-bonded: Cys85–Cys140, Cys184–Cys232, and Cys281–Cys331. The N-linked (GlcNAc...) asparagine glycan is linked to Asn221. N-linked (GlcNAc...) asparagine glycosylation is present at Asn337. Cys373 and Cys421 are oxidised to a cystine. 6 Fibronectin type-III domains span residues 472 to 566, 572 to 662, 667 to 762, 772 to 862, 887 to 986, and 988 to 1085; these read APRD…TQPE, PAPN…TLSD, APQN…TFES, VPSS…RPHT, PPVG…LVPT, and PPKD…TPKA. Residues Asn501 and Asn520 are each glycosylated (N-linked (GlcNAc...) asparagine). N-linked (GlcNAc...) asparagine glycans are attached at residues Asn670 and Asn746. A glycan (N-linked (GlcNAc...) asparagine) is linked at Asn940. The disordered stretch occupies residues 1072-1128; it reads GPMSEAVQFRTPKADSSDKMPNDQALGSAGKGSRLPDLGSDYKPPMSGSNSPHGSPT. A compositionally biased stretch (basic and acidic residues) spans 1083–1092; the sequence is PKADSSDKMP. Residues 1118–1128 are compositionally biased toward polar residues; it reads SGSNSPHGSPT. Residues 1137-1157 form a helical membrane-spanning segment; it reads LVIIVSVGVITIVVVVVIAVF. The Cytoplasmic segment spans residues 1158-1492; that stretch reads CTRRTTSHQK…MKDLNAITTA (335 aa). Disordered stretches follow at residues 1205–1237, 1266–1300, and 1321–1396; these read PIDKSPDPNPVMTDTPIPRNSQDITPVDNSMDS, PKMMMPFDSQPPQPVISAHPIHSLDNPHHHFHSSS, and SMSL…FAVP. Phosphoserine is present on residues Ser1209 and Ser1225. Over residues 1222 to 1237 the composition is skewed to polar residues; the sequence is PRNSQDITPVDNSMDS. Position 1229 is a phosphothreonine (Thr1229). Polar residues-rich tracts occupy residues 1321 to 1353 and 1361 to 1380; these read SMSLSDRANSTESVRNTPSTDTMPASSSQTCCT and ATSSSYLASSQEEDSGQSLP. Ser1432 is subject to Phosphoserine. Thr1435 is modified (phosphothreonine). Phosphoserine occurs at positions 1463, 1465, and 1466.

This sequence belongs to the immunoglobulin superfamily. DCC family. As to quaternary structure, interacts with BMP2, BMP4, BMP6, and BMP7. Interacts with RGMA and RGMB. Interacts with MYO10. In terms of tissue distribution, widely expressed.

Its subcellular location is the cell membrane. Functionally, multi-functional cell surface receptor regulating cell adhesion in many diverse developmental processes, including neural tube and mammary gland formation, myogenesis and angiogenesis. Receptor for members of the BMP, netrin, and repulsive guidance molecule (RGM) families. Netrin-Neogenin interactions result in a chemoattractive axon guidance response and cell-cell adhesion, the interaction between NEO1/Neogenin and RGMa and RGMb induces a chemorepulsive response. This is Neogenin from Mus musculus (Mouse).